Consider the following 423-residue polypeptide: Anthranilate 1,2-dioxygenase large subunit (423 aa).

Residues 53-168 (WNFVALEAEI…VDSYRGLVFA (116 aa)) enclose the Rieske domain. 4 residues coordinate [2Fe-2S] cluster: Cys-95, His-97, Cys-115, and His-118. His-223, His-228, and Asp-370 together coordinate Fe cation.

It belongs to the bacterial ring-hydroxylating dioxygenase alpha subunit family. Part of a multicomponent enzyme system composed of a reductase (AndAa), a ferredoxin (AndAb) and a two-subunit oxygenase component (AndAc and AndAd). Fe cation serves as cofactor. Requires [2Fe-2S] cluster as cofactor.

It carries out the reaction anthranilate + NADH + O2 + 3 H(+) = catechol + NH4(+) + CO2 + NAD(+). The catalysed reaction is anthranilate + NADPH + O2 + 3 H(+) = catechol + NH4(+) + CO2 + NADP(+). It functions in the pathway aromatic compound metabolism; anthranilate degradation via hydroxylation; catechol from anthranilate: step 1/1. In terms of biological role, oxygenase component of anthranilate dioxygenase multicomponent enzyme system which catalyzes the incorporation of both atoms of molecular oxygen into anthranilate to form catechol. Can also act on benzoate and salicylate but not on 2-chlorobenzoate or o-toluate. This Burkholderia cepacia (Pseudomonas cepacia) protein is Anthranilate 1,2-dioxygenase large subunit.